We begin with the raw amino-acid sequence, 118 residues long: Small ribosomal subunit protein uS13 (118 aa).

A disordered region spans residues 94–118; that stretch reads GLPLRGQRTRTNARTRKGPRKAIRK.

Belongs to the universal ribosomal protein uS13 family. As to quaternary structure, part of the 30S ribosomal subunit. Forms a loose heterodimer with protein S19. Forms two bridges to the 50S subunit in the 70S ribosome.

Its function is as follows. Located at the top of the head of the 30S subunit, it contacts several helices of the 16S rRNA. In the 70S ribosome it contacts the 23S rRNA (bridge B1a) and protein L5 of the 50S subunit (bridge B1b), connecting the 2 subunits; these bridges are implicated in subunit movement. Contacts the tRNAs in the A and P-sites. The sequence is that of Small ribosomal subunit protein uS13 from Stenotrophomonas maltophilia (strain R551-3).